Here is a 476-residue protein sequence, read N- to C-terminus: MGDLAAIILAAGKGTRMKSDLVKVMHPLAGAPMVAWPVEAARQAGTSRMVLVVGHQADTIREHFAGTEQVAFALQEEQLGTGHAVASAAAALDGFTGRVLILCGDVPLIRPETLRGMIDAHGATGAALTVLTTRLENPFGYGRIIRGFDGRVIRIVEEKDATPEERGRREVNAGIYCAEAAFLFDAVTRIGNDNAQGEYYLTDIVTMANEQGLRCTAHPVADPVEVMGVNDRAQLAEAGRFARQRINRELMLDGVTIVDPAATYIDRGAVVGRDTTVHPGVHLSGETRIGEGCTIEQGAVIKGSTLGNGCVVEPGAVIRSCRLGSHVMVKAGSVMEDAIIHDHTAIGPMAHLRPGTELMAHVKIGNFVETKKITMGEGSKASHLTYLGDASIGNNVNVGCGTITCNYDGVRKHRTVIEDDVFVGSDVQFVAPVTVGRNSLIAAGTTVTRDVPPDSLAIARAPQVNKDGWKLKQRDQ.

Residues 1 to 232 (MGDLAAIILA…PVEVMGVNDR (232 aa)) form a pyrophosphorylase region. Residues 9–12 (LAAG), K23, Q75, and 80–81 (GT) contribute to the UDP-N-acetyl-alpha-D-glucosamine site. Position 105 (D105) interacts with Mg(2+). 4 residues coordinate UDP-N-acetyl-alpha-D-glucosamine: G142, E157, N172, and N230. N230 provides a ligand contact to Mg(2+). The linker stretch occupies residues 233–253 (AQLAEAGRFARQRINRELMLD). Residues 254–476 (GVTIVDPAAT…DGWKLKQRDQ (223 aa)) are N-acetyltransferase. UDP-N-acetyl-alpha-D-glucosamine-binding residues include R353 and K371. H383 functions as the Proton acceptor in the catalytic mechanism. UDP-N-acetyl-alpha-D-glucosamine-binding residues include Y386 and N397. Residues 406-407 (NY), S425, A443, and R460 each bind acetyl-CoA.

This sequence in the N-terminal section; belongs to the N-acetylglucosamine-1-phosphate uridyltransferase family. It in the C-terminal section; belongs to the transferase hexapeptide repeat family. In terms of assembly, homotrimer. The cofactor is Mg(2+).

Its subcellular location is the cytoplasm. It carries out the reaction alpha-D-glucosamine 1-phosphate + acetyl-CoA = N-acetyl-alpha-D-glucosamine 1-phosphate + CoA + H(+). It catalyses the reaction N-acetyl-alpha-D-glucosamine 1-phosphate + UTP + H(+) = UDP-N-acetyl-alpha-D-glucosamine + diphosphate. The protein operates within nucleotide-sugar biosynthesis; UDP-N-acetyl-alpha-D-glucosamine biosynthesis; N-acetyl-alpha-D-glucosamine 1-phosphate from alpha-D-glucosamine 6-phosphate (route II): step 2/2. Its pathway is nucleotide-sugar biosynthesis; UDP-N-acetyl-alpha-D-glucosamine biosynthesis; UDP-N-acetyl-alpha-D-glucosamine from N-acetyl-alpha-D-glucosamine 1-phosphate: step 1/1. It participates in bacterial outer membrane biogenesis; LPS lipid A biosynthesis. Its function is as follows. Catalyzes the last two sequential reactions in the de novo biosynthetic pathway for UDP-N-acetylglucosamine (UDP-GlcNAc). The C-terminal domain catalyzes the transfer of acetyl group from acetyl coenzyme A to glucosamine-1-phosphate (GlcN-1-P) to produce N-acetylglucosamine-1-phosphate (GlcNAc-1-P), which is converted into UDP-GlcNAc by the transfer of uridine 5-monophosphate (from uridine 5-triphosphate), a reaction catalyzed by the N-terminal domain. The chain is Bifunctional protein GlmU from Geobacter metallireducens (strain ATCC 53774 / DSM 7210 / GS-15).